The following is a 146-amino-acid chain: 3-dehydroquinate dehydratase (146 aa).

Catalysis depends on tyrosine 22, which acts as the Proton acceptor. Substrate is bound by residues asparagine 73, histidine 79, and aspartate 86. Histidine 101 serves as the catalytic Proton donor. Substrate is bound by residues isoleucine 102–serine 103 and arginine 112.

This sequence belongs to the type-II 3-dehydroquinase family. Homododecamer.

The catalysed reaction is 3-dehydroquinate = 3-dehydroshikimate + H2O. It participates in metabolic intermediate biosynthesis; chorismate biosynthesis; chorismate from D-erythrose 4-phosphate and phosphoenolpyruvate: step 3/7. Functionally, catalyzes a trans-dehydration via an enolate intermediate. This Corynebacterium pseudotuberculosis (strain C231) protein is 3-dehydroquinate dehydratase (aroQ).